Consider the following 296-residue polypeptide: Bidirectional sugar transporter SWEET13 (296 aa).

The Extracellular segment spans residues Met-1–Pro-9. The helical transmembrane segment at Trp-10–Ile-30 threads the bilayer. In terms of domain architecture, MtN3/slv 1 spans Ala-13–Lys-98. The Cytoplasmic segment spans residues Pro-31–Phe-45. A helical membrane pass occupies residues Gln-46–Ile-66. Over Lys-67–Ala-71 the chain is Extracellular. Residues Leu-72–Leu-92 form a helical membrane-spanning segment. Residues Ala-93–Lys-105 are Cytoplasmic-facing. A helical membrane pass occupies residues Ile-106–Ser-126. Residues His-127–Val-133 lie on the Extracellular side of the membrane. The helical transmembrane segment at Ser-134–Ile-154 threads the bilayer. Positions Ser-134–Ala-217 constitute a MtN3/slv 2 domain. At Lys-155 to Pro-167 the chain is on the cytoplasmic side. A helical transmembrane segment spans residues Phe-168–Ile-188. Over Lys-189 to Tyr-192 the chain is Extracellular. The helical transmembrane segment at Val-193 to Phe-213 threads the bilayer. At Tyr-214–Val-296 the chain is on the cytoplasmic side.

It belongs to the SWEET sugar transporter family. Forms homooligomers and/or heterooligomers.

The protein localises to the cell membrane. Mediates both low-affinity uptake and efflux of sugar across the plasma membrane. Functionally, confers blight susceptibility. Confers TAL effector-mediated susceptibility to Xanthomonas oryzae pv. oryzae. The protein is Bidirectional sugar transporter SWEET13 (SWEET13) of Oryza sativa subsp. japonica (Rice).